The following is a 358-amino-acid chain: Probable branched-chain-amino-acid aminotransferase (358 aa).

At Lys196 the chain carries N6-(pyridoxal phosphate)lysine.

This sequence belongs to the class-IV pyridoxal-phosphate-dependent aminotransferase family. Pyridoxal 5'-phosphate serves as cofactor.

The catalysed reaction is L-leucine + 2-oxoglutarate = 4-methyl-2-oxopentanoate + L-glutamate. It carries out the reaction L-isoleucine + 2-oxoglutarate = (S)-3-methyl-2-oxopentanoate + L-glutamate. The enzyme catalyses L-valine + 2-oxoglutarate = 3-methyl-2-oxobutanoate + L-glutamate. The protein operates within amino-acid biosynthesis; L-isoleucine biosynthesis; L-isoleucine from 2-oxobutanoate: step 4/4. It participates in amino-acid biosynthesis; L-leucine biosynthesis; L-leucine from 3-methyl-2-oxobutanoate: step 4/4. Its pathway is amino-acid biosynthesis; L-valine biosynthesis; L-valine from pyruvate: step 4/4. Acts on leucine, isoleucine and valine. The polypeptide is Probable branched-chain-amino-acid aminotransferase (ilvE) (Staphylococcus epidermidis (strain ATCC 12228 / FDA PCI 1200)).